The sequence spans 687 residues: Guanine-nucleotide exchange factor YEL1 (687 aa).

The segment covering 14 to 27 has biased composition (polar residues); that stretch reads YGVSQKGYNDNFSE. 2 disordered regions span residues 14-35 and 63-97; these read YGVS…LHGS and AAND…TDQN. One can recognise an SEC7 domain in the interval 57–264; sequence ILQNKEAAND…SEYYKTLNET (208 aa). The segment covering 73–83 has biased composition (low complexity); it reads TTDTATAGTGT. Residue Thr290 is modified to Phosphothreonine. Phosphoserine is present on residues Ser293 and Ser299. A PH domain is found at 412–551; that stretch reads TSRRTSLSYL…DCINFWAGRI (140 aa).

The protein belongs to the YEL1 family.

Its subcellular location is the cytoplasm. It is found in the cell membrane. The protein localises to the bud neck. The protein resides in the bud tip. Guanine nucleotide exchange factor for ARF3 required for localization of ARF3 to the bud neck and tip and involved in actin patch polarization. In Saccharomyces cerevisiae (strain YJM789) (Baker's yeast), this protein is Guanine-nucleotide exchange factor YEL1 (YEL1).